The sequence spans 367 residues: MDMSGAGDRRSGAVRTWLYVVAALVVAMVAVGGATRLTGSGLSITEWRPVTGAIPPLTEADWAAEFAKYRDTPQYNILNQGMGLSAFKVLYGWEWGHRLLGRVIGLVFFLPLILFWWQGRISRRLGLGLLGLGLLGGLQGAIGWIMVASGLQPGMTAVAPLKLALHLTTASLILAGLVWLAAGERRGVLAPAPARLRATALLLPILVLVQIFLGGLVAGSHAGLVYNTWPTMDGQLVPPLDSLFAIRPWIENFVDNHALVQFDHRVTAYLVFVVAVLHAVDARLTGPKSAAGRAAGVVILVLAQMALGIATLLLAVPLWAALAHQVLAMAVLTMATVHARLSRGFGLVEPAAAEPPLGFEGLAGGRI.

A run of 5 helical transmembrane segments spans residues 12–32, 99–119, 127–147, 163–183, and 198–218; these read GAVRTWLYVVAALVVAMVAVG, LLGRVIGLVFFLPLILFWWQG, LGLLGLGLLGGLQGAIGWIMV, LALHLTTASLILAGLVWLAAG, and ATALLLPILVLVQIFLGGLVA. H264 lines the heme pocket. 3 helical membrane-spanning segments follow: residues 266–286, 296–316, and 317–337; these read VTAYLVFVVAVLHAVDARLTG, GVVILVLAQMALGIATLLLAV, and PLWAALAHQVLAMAVLTMATV. H324 is a heme binding site.

It belongs to the COX15/CtaA family. Type 2 subfamily. As to quaternary structure, interacts with CtaB. Requires heme b as cofactor.

It is found in the cell membrane. The catalysed reaction is Fe(II)-heme o + 2 A + H2O = Fe(II)-heme a + 2 AH2. The protein operates within porphyrin-containing compound metabolism; heme A biosynthesis; heme A from heme O: step 1/1. Catalyzes the conversion of heme O to heme A by two successive hydroxylations of the methyl group at C8. The first hydroxylation forms heme I, the second hydroxylation results in an unstable dihydroxymethyl group, which spontaneously dehydrates, resulting in the formyl group of heme A. This Methylobacterium radiotolerans (strain ATCC 27329 / DSM 1819 / JCM 2831 / NBRC 15690 / NCIMB 10815 / 0-1) protein is Heme A synthase.